An 855-amino-acid polypeptide reads, in one-letter code: E3 ubiquitin-protein ligase TRIM71 (855 aa).

Residue Ala2 is modified to N-acetylalanine. The RING-type zinc-finger motif lies at 12 to 94; the sequence is CLLCKEMCGS…ALKLRCPVCD (83 aa). Residues 26-42 show a composition bias toward low complexity; that stretch reads SSNSSASSSSSQTSTSS. 2 disordered regions span residues 26 to 48 and 127 to 177; these read SSNS…GGGP and EEPP…SPGS. Over residues 135–145 the composition is skewed to gly residues; that stretch reads RAGGGPGGAGG. The span at 147 to 157 shows a compositional bias: basic residues; the sequence is SNHRHHAHHPA. The segment at 181–228 adopts a B box-type 1; atypical zinc-finger fold; it reads RRPHGCSSCDEGNAASSRCLDCQEHLCDNCVRAHQRVRLTKDHYIERG. A B box-type 2 zinc finger spans residues 260-301; that stretch reads ERLGFCQHHDDEVLHLYCDTCSVPICRECTLGRHGGHSFAYL. The Zn(2+) site is built by Cys265, His268, Cys288, and His293. 2 coiled-coil regions span residues 314–352 and 378–411; these read QLLA…SEVK and QVKA…VLEE. A Filamin repeat occupies 466–567; that stretch reads SSGAFAPLTK…IENSPFKVVV (102 aa). NHL repeat units lie at residues 580 to 623, 627 to 670, 674 to 717, 721 to 764, 768 to 811, and 815 to 855; these read GLSF…FKPC, HHKF…FTFE, LLKF…FGPD, LNKY…IHPD, ARFL…FEAN, and LCKF…ILIF.

Belongs to the TRIM/RBCC family. As to quaternary structure, interacts (via NHL repeats) with AGO2; the interaction increases in presence of RNA. Interacts with HSP90AA1. Interacts (via NHL repeats) with MOV10, PABPC1, PUM1, PUM2, STAU2, XRN1 and XRN2 in an RNA-dependent manner. Interacts with SHCBP1; leading to enhance its stability. Autoubiquitinated. As to expression, highly expressed in undifferentiated embryonic stem cells (ESCs). Expressed in the epiblast and in interfollicular epidermal stem cells during early development. Also expressed in male germ cells and in the reproductive tract. Highly expressed in neuroepithelial cells, and its expression declines as neurogenesis proceeds (at protein level). Expressed in ependymal cells of the brain.

The protein resides in the cytoplasm. It localises to the P-body. The catalysed reaction is S-ubiquitinyl-[E2 ubiquitin-conjugating enzyme]-L-cysteine + [acceptor protein]-L-lysine = [E2 ubiquitin-conjugating enzyme]-L-cysteine + N(6)-ubiquitinyl-[acceptor protein]-L-lysine.. It functions in the pathway protein modification; protein ubiquitination. Functionally, E3 ubiquitin-protein ligase that cooperates with the microRNAs (miRNAs) machinery and promotes embryonic stem cells proliferation and maintenance. Binds to miRNAs and associates with AGO2, participating in post-transcriptional repression of transcripts such as CDKN1A. Facilitates the G1-S transition to promote rapid embryonic stem cell self-renewal by repressing CDKN1A expression. In addition, participates in post-transcriptional mRNA repression in a miRNA independent mechanism. Required to maintain proliferation and prevent premature differentiation of neural progenitor cells during early neural development: positively regulates FGF signaling by controlling the stability of SHCBP1. Specific regulator of miRNA biogenesis. miRNA Binds MIR29A hairpin and postranscriptionally modulates MIR29A levels, which indirectly regulates TET proteins expression. The chain is E3 ubiquitin-protein ligase TRIM71 (Trim71) from Mus musculus (Mouse).